The following is a 760-amino-acid chain: Catecholate siderophore receptor Fiu (760 aa).

The first 31 residues, 1-31 (MENNRNFPARQFHSLTFFAGLCIGITPVAQA), serve as a signal peptide directing secretion. A TBDR plug domain is found at 67 to 175 (PVADTTRTMT…PTGSINMISK (109 aa)). One can recognise a TBDR beta-barrel domain in the interval 180 to 760 (DSGIDASASI…TFLLTANMHF (581 aa)). The TonB C-terminal box signature appears at 743-760 (RYHPGEPRTFLLTANMHF).

It belongs to the TonB-dependent receptor family.

Its subcellular location is the cell outer membrane. In terms of biological role, involved in the active transport across the outer membrane of iron complexed with catecholate siderophores such as dihydroxybenzoylserine and dihydroxybenzoate. It derives its energy for transport by interacting with the trans-periplasmic membrane protein TonB. Can also transport catechol-substituted cephalosporins. Receptor for microcins M, H47 and E492. The sequence is that of Catecholate siderophore receptor Fiu (fiu) from Escherichia coli (strain K12).